The chain runs to 236 residues: Small ribosomal subunit protein uS2c (236 aa).

This sequence belongs to the universal ribosomal protein uS2 family.

Its subcellular location is the plastid. The protein localises to the chloroplast. The protein is Small ribosomal subunit protein uS2c (rps2) of Oenothera biennis (German evening primrose).